The following is an 891-amino-acid chain: Aconitate hydratase A (891 aa).

[4Fe-4S] cluster contacts are provided by Cys435, Cys501, and Cys504.

The protein belongs to the aconitase/IPM isomerase family. In terms of assembly, monomer. [4Fe-4S] cluster serves as cofactor.

The catalysed reaction is citrate = D-threo-isocitrate. It carries out the reaction (2S,3R)-3-hydroxybutane-1,2,3-tricarboxylate = 2-methyl-cis-aconitate + H2O. It participates in carbohydrate metabolism; tricarboxylic acid cycle; isocitrate from oxaloacetate: step 2/2. Its pathway is organic acid metabolism; propanoate degradation. Its function is as follows. Involved in the catabolism of short chain fatty acids (SCFA) via the tricarboxylic acid (TCA)(acetyl degradation route) and probably the 2-methylcitrate cycle I (propionate degradation route). Catalyzes the reversible isomerization of citrate to isocitrate via cis-aconitate. The apo form of AcnA functions as a RNA-binding regulatory protein. Could catalyze the hydration of 2-methyl-cis-aconitate to yield (2R,3S)-2-methylisocitrate. This is Aconitate hydratase A (acn) from Legionella pneumophila subsp. pneumophila (strain Philadelphia 1 / ATCC 33152 / DSM 7513).